A 594-amino-acid polypeptide reads, in one-letter code: Glutamate decarboxylase 1 (594 aa).

Residues 1–13 (MASSTPSSSATSS) show a composition bias toward low complexity. Positions 1–22 (MASSTPSSSATSSNAGADPNTA) are disordered. Position 78 is a phosphoserine (serine 78). 190–192 (QLS) contacts 4-aminobutanoate. N6-(pyridoxal phosphate)lysine is present on lysine 405. Position 567 (arginine 567) interacts with 4-aminobutanoate.

It belongs to the group II decarboxylase family. Homodimer. It depends on pyridoxal 5'-phosphate as a cofactor.

It carries out the reaction L-glutamate + H(+) = 4-aminobutanoate + CO2. In terms of biological role, catalyzes the synthesis of the inhibitory neurotransmitter gamma-aminobutyric acid (GABA) with pyridoxal 5'-phosphate as cofactor. The sequence is that of Glutamate decarboxylase 1 (GAD1) from Canis lupus familiaris (Dog).